Consider the following 552-residue polypeptide: Membrane protein insertase YidC (552 aa).

5 helical membrane-spanning segments follow: residues 7–24, 364–384, 434–454, 473–493, and 508–528; these read VLWV…DNWQ, WGWA…PLSA, LPVV…LASV, PFFI…SLNP, and PIAF…YYVV.

The protein belongs to the OXA1/ALB3/YidC family. Type 1 subfamily. In terms of assembly, interacts with the Sec translocase complex via SecD. Specifically interacts with transmembrane segments of nascent integral membrane proteins during membrane integration.

Its subcellular location is the cell inner membrane. Its function is as follows. Required for the insertion and/or proper folding and/or complex formation of integral membrane proteins into the membrane. Involved in integration of membrane proteins that insert both dependently and independently of the Sec translocase complex, as well as at least some lipoproteins. Aids folding of multispanning membrane proteins. The polypeptide is Membrane protein insertase YidC (Burkholderia cenocepacia (strain ATCC BAA-245 / DSM 16553 / LMG 16656 / NCTC 13227 / J2315 / CF5610) (Burkholderia cepacia (strain J2315))).